Here is a 354-residue protein sequence, read N- to C-terminus: Protein Wnt-8a (354 aa).

An N-terminal signal peptide occupies residues 1–19 (MGHLLMLWVAAGMCYPALG). An intrachain disulfide couples Cys54 to Cys65. Asn103 carries N-linked (GlcNAc...) asparagine glycosylation. 10 cysteine pairs are disulfide-bonded: Cys104/Cys112, Cys114/Cys132, Cys180/Cys194, Cys182/Cys189, Cys259/Cys297, Cys275/Cys290, Cys294/Cys336, Cys312/Cys327, Cys314/Cys324, and Cys319/Cys320. Ser186 is lipidated: O-palmitoleoyl serine. The N-linked (GlcNAc...) asparagine glycan is linked to Asn262.

The protein belongs to the Wnt family. In terms of assembly, forms a soluble 1:1 complex with AFM; this prevents oligomerization and is required for prolonged biological activity. The complex with AFM may represent the physiological form in body fluids. Palmitoleoylation is required for efficient binding to frizzled receptors. Depalmitoleoylation leads to Wnt signaling pathway inhibition. In terms of processing, proteolytic processing by TIKI1 and TIKI2 promotes oxidation and formation of large disulfide-bond oligomers, leading to inactivation of WNT8A.

The protein resides in the secreted. It localises to the extracellular space. It is found in the extracellular matrix. Functionally, ligand for members of the frizzled family of seven transmembrane receptors. Plays a role in embryonic patterning. The chain is Protein Wnt-8a (Wnt8a) from Mus musculus (Mouse).